The primary structure comprises 987 residues: Rho GTPase-activating protein 6 (987 aa).

Residues 1–21 (MSAQSLLHSVFSCSSPASGGT) show a composition bias toward polar residues. Disordered regions lie at residues 1-60 (MSAQ…RGST), 76-117 (SRLA…SGSF), and 144-170 (GSGSASSRSPASILSSSGGGPNGIFSS). At serine 37 the chain carries Phosphoserine. Residues 44–57 (GGCGSEMGAEGGLR) show a composition bias toward gly residues. Residues 100–115 (SSFSTPSTPQEKSPSG) show a composition bias toward polar residues. Positions 144 to 159 (GSGSASSRSPASILSS) are enriched in low complexity. Phosphoserine is present on serine 265. The tract at residues 324-363 (KQNKELSSSNSSLSSTSETPNESTSPNTPEPAPRARRRGA) is disordered. Low complexity predominate over residues 328–350 (ELSSSNSSLSSTSETPNESTSPN). The SH3-binding signature appears at 344-354 (NESTSPNTPEP). Serine 365 carries the phosphoserine modification. The region spanning 403–604 (LSLNPIYRQV…KMIENYEALF (202 aa)) is the Rho-GAP domain. Positions 641 to 676 (DILQTEVSFSMGGRHSSTDSNKASSGDISPYDNNSP) are disordered. A compositionally biased stretch (polar residues) spans 658–676 (TDSNKASSGDISPYDNNSP). Phosphoserine is present on residues serine 669, serine 675, serine 682, serine 713, serine 758, serine 776, serine 781, serine 790, and serine 824. Residues 709-731 (GHLSSPKSKSRESSPGPRLGKEM) are disordered. 2 disordered regions span residues 825-847 (TPHIQDGSRGTRRPAASSDPFLS) and 863-953 (WLQS…QDKQ). Positions 939-948 (LSSAYSLSAS) are enriched in low complexity. Phosphoserine is present on residues serine 941 and serine 944.

In terms of tissue distribution, expressed in retina and lung.

It localises to the cytoplasm. In terms of biological role, GTPase activator for the Rho-type GTPases by converting them to an inactive GDP-bound state. Could regulate the interactions of signaling molecules with the actin cytoskeleton. Promotes continuous elongation of cytoplasmic processes during cell motility and simultaneous retraction of the cell body changing the cell morphology. This chain is Rho GTPase-activating protein 6 (Arhgap6), found in Mus musculus (Mouse).